Reading from the N-terminus, the 181-residue chain is Large ribosomal subunit protein uL5 (181 aa).

Belongs to the universal ribosomal protein uL5 family. Part of the 50S ribosomal subunit; part of the 5S rRNA/L5/L18/L25 subcomplex. Contacts the 5S rRNA and the P site tRNA. Forms a bridge to the 30S subunit in the 70S ribosome.

Its function is as follows. This is one of the proteins that bind and probably mediate the attachment of the 5S RNA into the large ribosomal subunit, where it forms part of the central protuberance. In the 70S ribosome it contacts protein S13 of the 30S subunit (bridge B1b), connecting the 2 subunits; this bridge is implicated in subunit movement. Contacts the P site tRNA; the 5S rRNA and some of its associated proteins might help stabilize positioning of ribosome-bound tRNAs. The polypeptide is Large ribosomal subunit protein uL5 (Mesomycoplasma hyopneumoniae (strain 232) (Mycoplasma hyopneumoniae)).